The sequence spans 196 residues: MEELPATAIGLKVNDGIVLASERRLSYGGYVLSKQAKKVHKIGKFLMAGAGIYGDLQTLTRIMNVEIKYYEISTGKPISVHAAAKLLSVILYQYKVMPFISEILFGGVDEKGPQLYVLDPIGSLIEDNYAAVGSGARIAIGVLESEYDPNMNLDIAAQLITKAIKASIERDITSGDGIDLAIMDKKGNYENKFIPY.

Positions 1–6 (MEELPA) are cleaved as a propeptide — removed in mature form; by autocatalysis. Residue Thr7 is the Nucleophile of the active site.

The protein belongs to the peptidase T1B family. As to quaternary structure, the 20S proteasome core is composed of 14 alpha and 14 beta subunits that assemble into four stacked heptameric rings, resulting in a barrel-shaped structure. The two inner rings, each composed of seven catalytic beta subunits, are sandwiched by two outer rings, each composed of seven alpha subunits. The catalytic chamber with the active sites is on the inside of the barrel. Has a gated structure, the ends of the cylinder being occluded by the N-termini of the alpha-subunits. Is capped at one or both ends by the proteasome regulatory ATPase, PAN.

The protein resides in the cytoplasm. The catalysed reaction is Cleavage of peptide bonds with very broad specificity.. The formation of the proteasomal ATPase PAN-20S proteasome complex, via the docking of the C-termini of PAN into the intersubunit pockets in the alpha-rings, triggers opening of the gate for substrate entry. Interconversion between the open-gate and close-gate conformations leads to a dynamic regulation of the 20S proteasome proteolysis activity. Functionally, component of the proteasome core, a large protease complex with broad specificity involved in protein degradation. The polypeptide is Proteasome subunit beta 1 (Saccharolobus islandicus (strain Y.N.15.51 / Yellowstone #2) (Sulfolobus islandicus)).